The sequence spans 330 residues: Ketol-acid reductoisomerase (NADP(+)) (330 aa).

The KARI N-terminal Rossmann domain maps to 3–184; the sequence is LPVYYDKDID…GGGRMGVLET (182 aa). Residues 26–29, Ser-52, and Ser-54 contribute to the NADP(+) site; that span reads YGVQ. The active site involves His-109. An NADP(+)-binding site is contributed by Gly-135. The 145-residue stretch at 185–329 folds into the KARI C-terminal knotted domain; it reads SFKEECESDL…EILRAPFNHK (145 aa). Asp-193, Glu-197, Glu-229, and Glu-233 together coordinate Mg(2+). A substrate-binding site is contributed by Ser-254.

It belongs to the ketol-acid reductoisomerase family. Requires Mg(2+) as cofactor.

It carries out the reaction (2R)-2,3-dihydroxy-3-methylbutanoate + NADP(+) = (2S)-2-acetolactate + NADPH + H(+). The enzyme catalyses (2R,3R)-2,3-dihydroxy-3-methylpentanoate + NADP(+) = (S)-2-ethyl-2-hydroxy-3-oxobutanoate + NADPH + H(+). Its pathway is amino-acid biosynthesis; L-isoleucine biosynthesis; L-isoleucine from 2-oxobutanoate: step 2/4. It participates in amino-acid biosynthesis; L-valine biosynthesis; L-valine from pyruvate: step 2/4. Functionally, involved in the biosynthesis of branched-chain amino acids (BCAA). Catalyzes an alkyl-migration followed by a ketol-acid reduction of (S)-2-acetolactate (S2AL) to yield (R)-2,3-dihydroxy-isovalerate. In the isomerase reaction, S2AL is rearranged via a Mg-dependent methyl migration to produce 3-hydroxy-3-methyl-2-ketobutyrate (HMKB). In the reductase reaction, this 2-ketoacid undergoes a metal-dependent reduction by NADPH to yield (R)-2,3-dihydroxy-isovalerate. This is Ketol-acid reductoisomerase (NADP(+)) from Helicobacter pylori (strain J99 / ATCC 700824) (Campylobacter pylori J99).